The primary structure comprises 579 residues: XK-related protein 7 (579 aa).

Residues 1-18 show a composition bias toward low complexity; that stretch reads MAAKSDGAAASASPDPEG. Positions 1-40 are disordered; that stretch reads MAAKSDGAAASASPDPEGAAGGARGSAGGRGEAAAAAGPP. Residues 19-31 show a composition bias toward gly residues; that stretch reads AAGGARGSAGGRG. 2 helical membrane-spanning segments follow: residues 59–79 and 89–109; these read WVLC…WLAA and YFSL…LLSF. Residues 146–165 are disordered; that stretch reads GAFRTKEGSPEPGPQPAPSS. 5 helical membrane passes run 260–280, 314–334, 355–375, 384–404, and 415–435; these read LLPA…LASY, GLAF…FIVA, WEEI…WFNV, MTLY…FWYS, and LIMV…MCVY. The tract at residues 466-510 is disordered; that stretch reads ADAITSPPRSLPRTTGAERDGASAGERAGTPTPPVFQVRPGLPPT.

This sequence belongs to the XK family.

The protein localises to the cell membrane. The sequence is that of XK-related protein 7 from Homo sapiens (Human).